The primary structure comprises 340 residues: Guanine nucleotide-binding protein G(I)/G(S)/G(T) subunit beta-1 (340 aa).

At Ser-2 the chain carries N-acetylserine. Ser-2 is modified (phosphoserine). 7 WD repeats span residues 46–94 (RTRR…HAIP), 95–140 (LRSS…RELA), 141–181 (GHTG…TTFT), 182–223 (GHTG…QTFT), 224–267 (GHES…YSHD), 268–309 (NIIC…GVLA), and 310–340 (GHDN…KIWN). His-266 is modified (phosphohistidine).

This sequence belongs to the WD repeat G protein beta family. As to quaternary structure, g proteins are composed of 3 units, alpha, beta and gamma. The heterodimer formed by GNB1 and GNG2 interacts with ARHGEF5. The heterodimer formed by GNB1 and GNG2 interacts with GRK2. Forms a complex with GNAO1 and GNG3. Interacts with ARHGEF18 and RASD2. Forms complexes with TAS2R14 and G-proteins; these complexes play a role in the perception of bitterness. Component of the TAS2R14-GNAI1 complex, consisting of TAS2R14, GNAI1, GNB1 and GNG2. Component of the TAS2R14-GNAT3 complex, consisting of TAS2R14, GNAT3, GNB1 and GNG2. Component of the TAS2R14-GNAS2 complex, consisting of TAS2R14, GNAS2, GNB1 and GNG2. Phosphorylation at His-266 by NDKB contributes to G protein activation by increasing the high energetic phosphate transfer onto GDP.

Its function is as follows. Guanine nucleotide-binding proteins (G proteins) are involved as a modulator or transducer in various transmembrane signaling systems. The beta and gamma chains are required for the GTPase activity, for replacement of GDP by GTP, and for G protein-effector interaction. In Bos taurus (Bovine), this protein is Guanine nucleotide-binding protein G(I)/G(S)/G(T) subunit beta-1 (GNB1).